The chain runs to 624 residues: DNA mismatch repair protein MutL (624 aa).

The disordered stretch occupies residues 416 to 436 (LTPSVDQPDTGDGENPVAPEK).

This sequence belongs to the DNA mismatch repair MutL/HexB family.

Functionally, this protein is involved in the repair of mismatches in DNA. It is required for dam-dependent methyl-directed DNA mismatch repair. May act as a 'molecular matchmaker', a protein that promotes the formation of a stable complex between two or more DNA-binding proteins in an ATP-dependent manner without itself being part of a final effector complex. In Chlorobaculum tepidum (strain ATCC 49652 / DSM 12025 / NBRC 103806 / TLS) (Chlorobium tepidum), this protein is DNA mismatch repair protein MutL.